A 125-amino-acid chain; its full sequence is Cytochrome c' (125 aa).

Heme c-binding residues include R10, E67, C116, C119, and H120.

As to quaternary structure, homodimer. Binds 1 heme c group covalently per subunit.

Its function is as follows. Cytochrome c' is the most widely occurring bacterial c-type cytochrome. Cytochromes c' are high-spin proteins and the heme has no sixth ligand. Their exact function is not known. The protein is Cytochrome c' of Pararhodospirillum photometricum (Rhodospirillum photometricum).